A 148-amino-acid polypeptide reads, in one-letter code: uncharacterized protein (148 aa).

The next 3 membrane-spanning stretches (helical) occupy residues 25–45 (FCTV…LLTA), 85–105 (IVRF…LLYL), and 118–138 (LAAT…WVFG).

Belongs to the GtrA family.

Its subcellular location is the cell membrane. This is an uncharacterized protein from Bacillus subtilis (strain 168).